A 301-amino-acid polypeptide reads, in one-letter code: Protoheme IX farnesyltransferase (301 aa).

Transmembrane regions (helical) follow at residues 30-50 (VISL…PKAI), 55-75 (IIVS…GGMI), 106-126 (AYAI…LANP), 127-147 (LTAL…SIWL), 152-172 (WWNI…GFAA), 177-197 (FTLL…GHFW), 233-253 (ALMV…YLIV), and 281-301 (FKLS…VKLI).

Belongs to the UbiA prenyltransferase family. Protoheme IX farnesyltransferase subfamily.

It localises to the cell membrane. The enzyme catalyses heme b + (2E,6E)-farnesyl diphosphate + H2O = Fe(II)-heme o + diphosphate. It participates in porphyrin-containing compound metabolism; heme O biosynthesis; heme O from protoheme: step 1/1. In terms of biological role, converts heme B (protoheme IX) to heme O by substitution of the vinyl group on carbon 2 of heme B porphyrin ring with a hydroxyethyl farnesyl side group. In Sulfurisphaera tokodaii (strain DSM 16993 / JCM 10545 / NBRC 100140 / 7) (Sulfolobus tokodaii), this protein is Protoheme IX farnesyltransferase.